Reading from the N-terminus, the 305-residue chain is Sulfate adenylyltransferase subunit 2 (305 aa).

It belongs to the PAPS reductase family. CysD subfamily. Heterodimer composed of CysD, the smaller subunit, and CysN.

It carries out the reaction sulfate + ATP + H(+) = adenosine 5'-phosphosulfate + diphosphate. It functions in the pathway sulfur metabolism; hydrogen sulfide biosynthesis; sulfite from sulfate: step 1/3. In terms of biological role, with CysN forms the ATP sulfurylase (ATPS) that catalyzes the adenylation of sulfate producing adenosine 5'-phosphosulfate (APS) and diphosphate, the first enzymatic step in sulfur assimilation pathway. APS synthesis involves the formation of a high-energy phosphoric-sulfuric acid anhydride bond driven by GTP hydrolysis by CysN coupled to ATP hydrolysis by CysD. The chain is Sulfate adenylyltransferase subunit 2 from Pseudomonas putida (strain ATCC 700007 / DSM 6899 / JCM 31910 / BCRC 17059 / LMG 24140 / F1).